A 317-amino-acid polypeptide reads, in one-letter code: Protoheme IX farnesyltransferase (317 aa).

Transmembrane regions (helical) follow at residues 36–56 (VMVLVIFTALVGMVVSDATVN), 57–77 (PVIAAISLLMIAVGAGASGCL), 108–128 (LAFGIVLSVGSVLILGLASNW), 129–149 (LAAGLLAFTIVFYAVIYSMWL), 157–177 (IVIGGAAGALPPVVGQAAVTG), 184–204 (LVLFAIIFIWTPPHFWALALV), 230–247 (IIWYSLVLAPLALLPVWL), 251–273 (GWLYAVVGVLGGLGMLAGAVQVY), and 284–304 (AAMGLFAFSILYLFLLFSALL).

The protein belongs to the UbiA prenyltransferase family. Protoheme IX farnesyltransferase subfamily.

The protein localises to the cell inner membrane. It catalyses the reaction heme b + (2E,6E)-farnesyl diphosphate + H2O = Fe(II)-heme o + diphosphate. The protein operates within porphyrin-containing compound metabolism; heme O biosynthesis; heme O from protoheme: step 1/1. In terms of biological role, converts heme B (protoheme IX) to heme O by substitution of the vinyl group on carbon 2 of heme B porphyrin ring with a hydroxyethyl farnesyl side group. This is Protoheme IX farnesyltransferase from Methylorubrum extorquens (strain CM4 / NCIMB 13688) (Methylobacterium extorquens).